The sequence spans 319 residues: Major intracellular serine protease (319 aa).

The propeptide occupies 1–17; it reads MNGEIRLIPYVTNEQIM. Residues 23 to 307 enclose the Peptidase S8 domain; sequence PEGIKVIKAP…FLYLTAPDEL (285 aa). Catalysis depends on charge relay system residues aspartate 50, histidine 87, and serine 246.

This sequence belongs to the peptidase S8 family. In terms of assembly, homodimer.

It is found in the cytoplasm. Major intracellular protease produced by Bacillus subtilis. The polypeptide is Major intracellular serine protease (isp) (Bacillus subtilis (strain 168)).